Reading from the N-terminus, the 282-residue chain is Non-selective voltage-gated ion channel VDAC2 (282 aa).

The residue at position 1 (Ala1) is an N-acetylalanine. 19 consecutive transmembrane segments (beta stranded) span residues 25 to 34 (LVKLDVKTKS), 38 to 46 (VEFTTSGTS), 53 to 63 (VNGSLETKYKW), 68 to 75 (LTFTEKWN), 79 to 88 (TLGTEIAIED), 94 to 103 (LKLTFDTTFS), 110 to 119 (SGKVKAAYKQ), 122 to 129 (VNLGCDVD), 136 to 144 (AIHGSAVVG), 149 to 157 (LAGYQMTFD), 162 to 174 (KLTK…GYKT), 177 to 184 (FQLHTNVN), 188 to 197 (EFAGSIYQKV), 201 to 210 (METAVNLAWT), 217 to 226 (RFGIAAKYQL), 230 to 237 (AAISAKVN), 241 to 250 (LVGVGYTQTL), 253 to 262 (GVKLTLSALV), and 272 to 281 (HKLGLGLELE). NAD(+)-binding positions include 241 to 243 (LVG) and 259 to 263 (SALVD).

Belongs to the eukaryotic mitochondrial porin family. As to quaternary structure, monomer, homodimer and higher order oligomers; formation of higher order structures is necessary for scramblase activity. As to expression, expressed in skeletal muscle and oocytes.

Its subcellular location is the mitochondrion outer membrane. It is found in the membrane. It catalyses the reaction chloride(in) = chloride(out). It carries out the reaction K(+)(in) = K(+)(out). The catalysed reaction is a 1,2-diacyl-sn-glycero-3-phospho-L-serine(in) = a 1,2-diacyl-sn-glycero-3-phospho-L-serine(out). The enzyme catalyses a 1,2-diacyl-sn-glycero-3-phosphocholine(in) = a 1,2-diacyl-sn-glycero-3-phosphocholine(out). It catalyses the reaction a 1,2-diacyl-sn-glycero-3-phospho-(1D-myo-inositol)(in) = a 1,2-diacyl-sn-glycero-3-phospho-(1D-myo-inositol)(out). In terms of biological role, non-selective voltage-gated ion channel that mediates the transport of anions and cations through the mitochondrion outer membrane and plasma membrane. The channel adopts an open conformation at zero mV and a closed conformation at both positive and negative potentials. There are two populations of channels; the main that functions in a lower open-state conductance with lower ion selectivity, that switch, in a voltage-dependent manner, from the open to a low-conducting 'closed' state and the other that has a normal ion selectivity in the typical high conductance, 'open' state. Catalyzes the scrambling of phospholipids across the outer mitochondrial membrane; the mechanism is unrelated to channel activity and is capable of translocating both anionic and zwitterionic phospholipids. The polypeptide is Non-selective voltage-gated ion channel VDAC2 (Xenopus laevis (African clawed frog)).